Consider the following 214-residue polypeptide: 7-cyano-7-deazaguanine synthase (214 aa).

10 to 20 (FSGGQDSTTCL) contacts ATP. Residues Cys-184, Cys-193, Cys-196, and Cys-199 each contribute to the Zn(2+) site.

This sequence belongs to the QueC family. Homodimer. It depends on Zn(2+) as a cofactor.

It catalyses the reaction 7-carboxy-7-deazaguanine + NH4(+) + ATP = 7-cyano-7-deazaguanine + ADP + phosphate + H2O + H(+). Its pathway is purine metabolism; 7-cyano-7-deazaguanine biosynthesis. In terms of biological role, catalyzes the ATP-dependent conversion of 7-carboxy-7-deazaguanine (CDG) to 7-cyano-7-deazaguanine (preQ(0)). The chain is 7-cyano-7-deazaguanine synthase from Exiguobacterium sp. (strain ATCC BAA-1283 / AT1b).